The following is a 405-amino-acid chain: Prostaglandin E2 receptor EP1 subtype (405 aa).

The Extracellular portion of the chain corresponds to 1 to 39; that stretch reads MSPYGLNLSLVDEATTCVTPRVPNTSVVLPTGGNGTSPA. Asn-7, Asn-24, and Asn-34 each carry an N-linked (GlcNAc...) asparagine glycan. Residues 40-62 traverse the membrane as a helical segment; that stretch reads LPIFSMTLGAVSNVLALALLAQV. Topologically, residues 63–80 are cytoplasmic; it reads AGRLRRRRSTATFLLFVA. Residues 81–99 traverse the membrane as a helical segment; sequence SLLAIDLAGHVIPGALVLR. Residues 100-113 are Extracellular-facing; that stretch reads LYTAGRAPAGGACH. The cysteines at positions 112 and 190 are disulfide-linked. A helical membrane pass occupies residues 114–135; the sequence is FLGGCMVFFGLCPLLLGCGMAV. At 136 to 157 the chain is on the cytoplasmic side; it reads ERCVGVTQPLIHAARVSVARAR. The chain crosses the membrane as a helical span at residues 158-179; the sequence is LALALLAAMALAVALLPLVHVG. Over 180 to 202 the chain is Extracellular; it reads HYELQYPGTWCFISLGPPGGWRQ. The helical transmembrane segment at 203–228 threads the bilayer; the sequence is ALLAGLFAGLGLAALLAALVCNTLSG. Topologically, residues 229–301 are cytoplasmic; that stretch reads LALLRARWRR…HAHDVEMVGQ (73 aa). A helical membrane pass occupies residues 302–323; sequence LVGIMVVSCICWSPLLVLVVLA. Over 324-337 the chain is Extracellular; it reads IGGWNSNSLQRPLF. Residues 338–357 form a helical membrane-spanning segment; sequence LAVRLASWNQILDPWVYILL. Over 358–405 the chain is Cytoplasmic; the sequence is RQAMLRQLLRLLPLRVSAKGGPTELSLTKSAWEASSLRSSRHSGFSHL.

The protein belongs to the G-protein coupled receptor 1 family. Post-translationally, phosphorylated. As to expression, highly abundant in kidney and lung. Found in a lesser extent in spleen, colon, and thymus. Also expressed in uterine myometrium and endometrium.

It localises to the cell membrane. In terms of biological role, receptor for prostaglandin E2 (PGE2). The activity of this receptor is mediated by G(q) proteins which activate a phosphatidylinositol-calcium second messenger system. May play a role as an important modulator of renal function. Implicated the smooth muscle contractile response to PGE2 in various tissues. Isoform 1 and isoform 2 have identical ligand binding properties, but isoform 2 lacks coupling to calcium mobilization and may therefore attenuate the action of PGE2 on tissues. The sequence is that of Prostaglandin E2 receptor EP1 subtype (Ptger1) from Rattus norvegicus (Rat).